Consider the following 332-residue polypeptide: L-lactate dehydrogenase A chain (332 aa).

NAD(+)-binding positions include 29–57 (GMVG…MEDK) and Arg-99. Arg-106, Asn-138, and Arg-169 together coordinate substrate. Asn-138 is a binding site for NAD(+). His-193 functions as the Proton acceptor in the catalytic mechanism. Residue Thr-248 coordinates substrate.

This sequence belongs to the LDH/MDH superfamily. LDH family. As to quaternary structure, homotetramer.

It is found in the cytoplasm. The enzyme catalyses (S)-lactate + NAD(+) = pyruvate + NADH + H(+). It participates in fermentation; pyruvate fermentation to lactate; (S)-lactate from pyruvate: step 1/1. Functionally, interconverts simultaneously and stereospecifically pyruvate and lactate with concomitant interconversion of NADH and NAD(+). This is L-lactate dehydrogenase A chain (ldha) from Sphyraena argentea (Pacific barracuda).